The sequence spans 314 residues: Short chain dehydrogenase atnD (314 aa).

Residues Leu41, Lys66, Asp90, and Asn116 each coordinate NADP(+). Catalysis depends on proton donor residues Ser171 and Tyr204. The NADP(+) site is built by Tyr204 and Lys208. Lys208 functions as the Lowers pKa of active site Tyr in the catalytic mechanism.

This sequence belongs to the short-chain dehydrogenases/reductases (SDR) family.

It functions in the pathway secondary metabolite biosynthesis. Short chain dehydrogenase; part of the gene cluster that mediates the biosynthesis of aspercryptins, linear lipopeptides built from six amino acids including 2 highly unusual and nonproteogenic amino acids, 2-amino-octanoic acid (2aoa) and 2-amino-dodecanol (2adol). The core structure of aspercryptins is as follows: Ser/Ala-Thr-Ile/Val-2aoa-Asn-2adol. The first step of aspercryptin biosynthesis is the generation of the fatty acid precursors, octanoic and dodecanoic acids, by the FAS subunits atnF and atnM. The fatty acid precursors are likely transformed into the corresponding alpha-amino fatty acids in three steps. First, they are hydroxylated by the cytochrome P450 monooxygenase atnE, then oxidized to the corresponding alpha-keto acids by the NAD(P)-dependent oxidoreductase atnD, and finally converted to the alpha-amino fatty acids by the PLP-dependent aminotransferases atnH or atnJ. the alpha-amino fatty acids, 2-amino-octanoic and 2-amino-dodecanoic acids, are recognized, activated, and covalently tethered to the NRPS atnA by its fourth and sixth adenylation domains. The second module of atnA is the Thr module and contains an epimerase (E) domain responsible for the epimerization of Thr to D-allo-Thr. Additionally, despite atnA having only one epimerase domain, the first amino acid of aspercryptin A1 is D-Ser, suggesting that serine is either loaded directly as D-Ser on the first module or that the epimerase domain in the threonine module epimerizes both L-Ser and L-Thr. After condensation of the hexapeptide of aspercryptin, the C-terminal reductase (TE) domain might be involved in the reductive release and production of the aldehyde hexapeptide. Further reduction would generate aspercryptins. The variety of aspercryptins produced reflects the flexibility of the atnA NRPS, allowing incorporation of alanine instead of serine, valine for isoleucine, and a C10 fatty amino alcohol instead of the C12 version. AtnB seems to be involved in the selectivity for Ile versus Val by the third module. Moreover, type B, C and D aspercryptins have an additional N-terminal cichorine, acetyl and propionyl group respectively. In Emericella nidulans (strain FGSC A4 / ATCC 38163 / CBS 112.46 / NRRL 194 / M139) (Aspergillus nidulans), this protein is Short chain dehydrogenase atnD.